The primary structure comprises 125 residues: Fluoride-specific ion channel FluC (125 aa).

4 helical membrane-spanning segments follow: residues 1 to 21 (MIQA…RYYV), 32 to 52 (AFPW…GVFA), 68 to 88 (LLIT…LDAI), and 101 to 121 (IYTV…LAVM). Na(+) contacts are provided by glycine 75 and threonine 78.

This sequence belongs to the fluoride channel Fluc/FEX (TC 1.A.43) family.

It localises to the cell inner membrane. It catalyses the reaction fluoride(in) = fluoride(out). Its activity is regulated as follows. Na(+) is not transported, but it plays an essential structural role and its presence is essential for fluoride channel function. Functionally, fluoride-specific ion channel. Important for reducing fluoride concentration in the cell, thus reducing its toxicity. This is Fluoride-specific ion channel FluC from Rhizobium leguminosarum bv. trifolii (strain WSM2304).